The chain runs to 341 residues: Ferredoxin--NADP reductase (341 aa).

7 residues coordinate FAD: Glu-36, Gln-44, Phe-49, Val-89, Phe-123, Asp-289, and Thr-329.

It belongs to the ferredoxin--NADP reductase type 2 family. In terms of assembly, homodimer. FAD serves as cofactor.

The catalysed reaction is 2 reduced [2Fe-2S]-[ferredoxin] + NADP(+) + H(+) = 2 oxidized [2Fe-2S]-[ferredoxin] + NADPH. This chain is Ferredoxin--NADP reductase, found in Ligilactobacillus salivarius (strain UCC118) (Lactobacillus salivarius).